Consider the following 415-residue polypeptide: Dynein assembly factor with WD repeat domains 1 (415 aa).

8 WD repeats span residues Ala-90–Thr-129, Gly-132–Thr-172, Gly-175–Thr-214, Gly-217–Val-256, Gly-259–Thr-298, Gly-301–Gln-340, Gly-343–Glu-384, and Gly-385–His-415.

It belongs to the WD repeat WDR69 family. In terms of tissue distribution, expressed in organs bearing motile cilia, including the pronephros, otic vesicles and Kupffer's vesicle.

Its subcellular location is the cytoplasm. It localises to the cytoskeleton. The protein resides in the flagellum basal body. The protein localises to the flagellum axoneme. In terms of biological role, required for axonemal dynein assembly and ciliary motility in ciliated organs, including Kupffer's vesicle, during embryogenesis. Facilitates the onset of robust cilia motility during development. The polypeptide is Dynein assembly factor with WD repeat domains 1 (daw1) (Danio rerio (Zebrafish)).